We begin with the raw amino-acid sequence, 150 residues long: MGVQPPNFSWVLPGRLAGLALPRLPAHYQFLLDLGVRHLVSLTERGPPHSDSCPGLTLHRLRIPDFCPPAPDQIDRFVQIVDEANARGEAVGVHCALGFGRTGTMLACYLVKERGLAAGDAIAEIRRLRPGSIETYEQEKAVFQFYQRTK.

The Tyrosine-protein phosphatase domain maps to 7 to 150; sequence NFSWVLPGRL…AVFQFYQRTK (144 aa). Residue C95 is the Phosphocysteine intermediate of the active site.

The protein belongs to the protein-tyrosine phosphatase family. Non-receptor class dual specificity subfamily. As to expression, widely expressed. Highly expressed in spleen, prostate, colon, adrenal gland, mammary gland, thyroid and trachea. Expressed at lower level in uterus, small intestine, bladder, bone marrow, brain, spinal cord and stomach.

Its subcellular location is the cytoplasm. It localises to the cytosol. It is found in the nucleus. It catalyses the reaction O-phospho-L-tyrosyl-[protein] + H2O = L-tyrosyl-[protein] + phosphate. It carries out the reaction O-phospho-L-seryl-[protein] + H2O = L-seryl-[protein] + phosphate. The catalysed reaction is O-phospho-L-threonyl-[protein] + H2O = L-threonyl-[protein] + phosphate. Its function is as follows. Protein phosphatase that mediates dephosphorylation of proteins phosphorylated on Tyr and Ser/Thr residues. In vitro, it can dephosphorylate p44-ERK1 (MAPK3) but not p54 SAPK-beta (MAPK10) in vitro. Able to enhance activation of JNK and p38 (MAPK14). The protein is Dual specificity protein phosphatase 23 (DUSP23) of Homo sapiens (Human).